The primary structure comprises 696 residues: DNA ligase (696 aa).

NAD(+) contacts are provided by residues 36–40, 85–86, and glutamate 123; these read DAEYD and SL. The active-site N6-AMP-lysine intermediate is the lysine 125. 4 residues coordinate NAD(+): arginine 146, glutamate 181, lysine 319, and lysine 343. 4 residues coordinate Zn(2+): cysteine 437, cysteine 440, cysteine 455, and cysteine 461. Residues 618–696 form the BRCT domain; it reads PEGTSLAGKT…EDGLKALLGL (79 aa).

Belongs to the NAD-dependent DNA ligase family. LigA subfamily. Mg(2+) serves as cofactor. It depends on Mn(2+) as a cofactor.

The enzyme catalyses NAD(+) + (deoxyribonucleotide)n-3'-hydroxyl + 5'-phospho-(deoxyribonucleotide)m = (deoxyribonucleotide)n+m + AMP + beta-nicotinamide D-nucleotide.. DNA ligase that catalyzes the formation of phosphodiester linkages between 5'-phosphoryl and 3'-hydroxyl groups in double-stranded DNA using NAD as a coenzyme and as the energy source for the reaction. It is essential for DNA replication and repair of damaged DNA. The sequence is that of DNA ligase from Bordetella pertussis (strain Tohama I / ATCC BAA-589 / NCTC 13251).